The chain runs to 189 residues: Putative manganese efflux pump MntP (189 aa).

6 helical membrane passes run 3 to 23, 41 to 61, 65 to 85, 106 to 128, 141 to 161, and 168 to 188; these read PVSL…AAIG, IIFG…GQAA, VADW…LHMI, WILA…GLAF, GLAT…LGAV, and MVGG…HLSA.

Belongs to the MntP (TC 9.B.29) family.

It localises to the cell inner membrane. In terms of biological role, probably functions as a manganese efflux pump. This chain is Putative manganese efflux pump MntP, found in Pseudomonas aeruginosa (strain LESB58).